The primary structure comprises 75 residues: Small ribosomal subunit protein bS18 (75 aa).

The protein belongs to the bacterial ribosomal protein bS18 family. Part of the 30S ribosomal subunit. Forms a tight heterodimer with protein bS6.

In terms of biological role, binds as a heterodimer with protein bS6 to the central domain of the 16S rRNA, where it helps stabilize the platform of the 30S subunit. In Roseobacter denitrificans (strain ATCC 33942 / OCh 114) (Erythrobacter sp. (strain OCh 114)), this protein is Small ribosomal subunit protein bS18.